An 84-amino-acid polypeptide reads, in one-letter code: Anthracycline acyl carrier protein DauA (84 aa).

The Carrier domain maps to 3 to 80 (ELSLAELREI…SMLIFVNERL (78 aa)). Ser-40 bears the O-(pantetheine 4'-phosphoryl)serine mark.

The protein operates within antibiotic biosynthesis; daunorubicin biosynthesis. It participates in antibiotic biosynthesis; carminomycin biosynthesis. Its pathway is antibiotic biosynthesis; rhodomycin biosynthesis. It functions in the pathway antibiotic biosynthesis; aclacinomycin biosynthesis. Involved in the biosynthesis of aklanonate which is an important precursor common to the formation of the clinically significant anthracyclines such as carminomycin, daunorubicin (daunomycin), rhodomycin, aclacinomycin T (aklavin) and aclacinomycin A (aclarubicin). These compounds are aromatic polyketide antibiotics that exhibit high cytotoxicity and are widely applied in the chemotherapy of a variety of cancers. The chain is Anthracycline acyl carrier protein DauA (dauA) from Streptomyces sp. (strain C5).